The chain runs to 336 residues: Pyridoxal 5'-phosphate synthase subunit PdxS (336 aa).

Asp33 is a binding site for D-ribose 5-phosphate. Residue Lys90 is the Schiff-base intermediate with D-ribose 5-phosphate of the active site. A D-ribose 5-phosphate-binding site is contributed by Gly162. Arg174 is a D-glyceraldehyde 3-phosphate binding site. D-ribose 5-phosphate is bound by residues Gly260 and 281 to 282 (GS).

The protein belongs to the PdxS/SNZ family. In terms of assembly, in the presence of PdxT, forms a dodecamer of heterodimers.

It catalyses the reaction aldehydo-D-ribose 5-phosphate + D-glyceraldehyde 3-phosphate + L-glutamine = pyridoxal 5'-phosphate + L-glutamate + phosphate + 3 H2O + H(+). Its pathway is cofactor biosynthesis; pyridoxal 5'-phosphate biosynthesis. Catalyzes the formation of pyridoxal 5'-phosphate from ribose 5-phosphate (RBP), glyceraldehyde 3-phosphate (G3P) and ammonia. The ammonia is provided by the PdxT subunit. Can also use ribulose 5-phosphate and dihydroxyacetone phosphate as substrates, resulting from enzyme-catalyzed isomerization of RBP and G3P, respectively. The chain is Pyridoxal 5'-phosphate synthase subunit PdxS from Picrophilus torridus (strain ATCC 700027 / DSM 9790 / JCM 10055 / NBRC 100828 / KAW 2/3).